An 80-amino-acid chain; its full sequence is Putative defensin-like protein 15 (80 aa).

The N-terminal stretch at 1–29 (MAKFASIITFIYAALVLFAAFEVPTMVEA) is a signal peptide. The residue at position 30 (glutamine 30) is a Pyrrolidone carboxylic acid. Cystine bridges form between cysteine 33–cysteine 80, cysteine 44–cysteine 65, cysteine 50–cysteine 74, and cysteine 54–cysteine 76.

It belongs to the DEFL family.

The protein resides in the secreted. Its function is as follows. Confers broad-spectrum resistance to pathogens. In Arabidopsis thaliana (Mouse-ear cress), this protein is Putative defensin-like protein 15 (PDF1.2B).